Reading from the N-terminus, the 558-residue chain is GPI mannosyltransferase 3 (558 aa).

The next 4 membrane-spanning stretches (helical) occupy residues 53 to 73 (GLRS…LKLL), 81 to 101 (VWFA…VSVF), 164 to 184 (AYCG…LLTL), and 190 to 210 (VPFL…AVVL). Asn-220 carries N-linked (GlcNAc...) asparagine glycosylation. The chain crosses the membrane as a helical span at residues 234–254 (IVLTGLIVLVAVLGGVMVLDY). Asn-275 carries N-linked (GlcNAc...) asparagine glycosylation. 4 helical membrane passes run 292-312 (VLVG…LVLW), 323-343 (PVLG…LIDH), 348-368 (FVFV…VRWS), and 372-392 (AVVV…IYLM).

It belongs to the glycosyltransferase 22 family. PIGB subfamily.

It is found in the endoplasmic reticulum membrane. It participates in glycolipid biosynthesis; glycosylphosphatidylinositol-anchor biosynthesis. Its function is as follows. Mannosyltransferase involved in glycosylphosphatidylinositol-anchor biosynthesis. Transfers the third alpha-1,2-mannose to Man2-GlcN-acyl-PI during GPI precursor assembly. This Trypanosoma brucei brucei protein is GPI mannosyltransferase 3 (GPI10).